A 90-amino-acid chain; its full sequence is Acylphosphatase (90 aa).

An Acylphosphatase-like domain is found at 3–90; sequence RVLIKLTGKV…DIYLDFSIVR (88 aa). Residues Arg-18 and Asn-36 contribute to the active site.

Belongs to the acylphosphatase family.

It carries out the reaction an acyl phosphate + H2O = a carboxylate + phosphate + H(+). The protein is Acylphosphatase (acyP) of Shewanella oneidensis (strain ATCC 700550 / JCM 31522 / CIP 106686 / LMG 19005 / NCIMB 14063 / MR-1).